We begin with the raw amino-acid sequence, 463 residues long: FAD-dependent monooxygenase ausM (463 aa).

E40, G54, and R113 together coordinate FAD. Residue Y217 is part of the active site. FAD is bound by residues D309 and A322. The helical transmembrane segment at 443–463 (VPWLVISLPVLASVLCYLMFA) threads the bilayer.

Belongs to the paxM FAD-dependent monooxygenase family. FAD serves as cofactor.

Its subcellular location is the membrane. It functions in the pathway secondary metabolite biosynthesis; terpenoid biosynthesis. Functionally, FAD-dependent monooxygenase; part of the gene cluster that mediates the biosynthesis of calidodehydroaustin, a fungal meroterpenoid. The first step of the pathway is the synthesis of 3,5-dimethylorsellinic acid by the polyketide synthase ausA. 3,5-dimethylorsellinic acid is then prenylated by the polyprenyl transferase ausN. Further epoxidation by the FAD-dependent monooxygenase ausM and cyclization by the probable terpene cyclase ausL lead to the formation of protoaustinoid A. Protoaustinoid A is then oxidized to spiro-lactone preaustinoid A3 by the combined action of the FAD-binding monooxygenases ausB and ausC, and the dioxygenase ausE. Acid-catalyzed keto-rearrangement and ring contraction of the tetraketide portion of preaustinoid A3 by ausJ lead to the formation of preaustinoid A4. The aldo-keto reductase ausK, with the help of ausH, is involved in the next step by transforming preaustinoid A4 into isoaustinone which is in turn hydroxylated by the P450 monooxygenase ausI to form austinolide. The cytochrome P450 monooxygenase ausG modifies austinolide to austinol. Austinol is further acetylated to austin by the O-acetyltransferase ausP, which spontaneously changes to dehydroaustin. The cytochrome P450 monooxygenase ausR then converts dehydroaustin is into 7-dehydrodehydroaustin. The hydroxylation catalyzed by ausR permits the O-acetyltransferase ausQ to add an additional acetyl group to the molecule, leading to the formation of acetoxydehydroaustin. The short chain dehydrogenase ausT catalyzes the reduction of the double bond present between carbon atoms 1 and 2 to convert 7-dehydrodehydroaustin into 1,2-dihydro-7-hydroxydehydroaustin. AusQ catalyzes not only an acetylation reaction but also the addition of the PKS ausV diketide product to 1,2-dihydro-7-hydroxydehydroaustin, forming precalidodehydroaustin. Finally, the iron/alpha-ketoglutarate-dependent dioxygenase converts precalidodehydroaustin into calidodehydroaustin. The protein is FAD-dependent monooxygenase ausM of Aspergillus calidoustus.